A 243-amino-acid polypeptide reads, in one-letter code: Exosome complex component Rrp41 (243 aa).

This sequence belongs to the RNase PH family. Rrp41 subfamily. Component of the archaeal exosome complex. Forms a hexameric ring-like arrangement composed of 3 Rrp41-Rrp42 heterodimers. The hexameric ring associates with a trimer of Rrp4 and/or Csl4 subunits.

The protein localises to the cytoplasm. Functionally, catalytic component of the exosome, which is a complex involved in RNA degradation. Has 3'-&gt;5' exoribonuclease activity. Can also synthesize heteromeric RNA-tails. The sequence is that of Exosome complex component Rrp41 from Sulfurisphaera tokodaii (strain DSM 16993 / JCM 10545 / NBRC 100140 / 7) (Sulfolobus tokodaii).